The sequence spans 403 residues: PP2A regulatory subunit TAP46 (403 aa).

2 disordered regions span residues 158 to 184 (ERRG…LDDD) and 351 to 403 (ANSS…TPCG). 2 stretches are compositionally biased toward acidic residues: residues 174 to 184 (ETEEDDVLDDD) and 366 to 375 (EDDEEDDDDA). Over residues 376–391 (AQDKARAWDDWKDDNP) the composition is skewed to basic and acidic residues.

This sequence belongs to the IGBP1/TAP42 family.

Functionally, involved in the regulation of the TOR signaling pathway. Seems to act as a regulator of PP2A catalytic activity. This Nicotiana tabacum (Common tobacco) protein is PP2A regulatory subunit TAP46.